A 363-amino-acid chain; its full sequence is Carbamoyl phosphate synthase small chain (363 aa).

Residues 1–171 (MEDGTLFAGA…PYRIPGPGPR (171 aa)) are CPSase. L-glutamine-binding residues include Ser39, Gly219, and Gly221. Residues 171–359 (RVVAVDFGAK…LALVDRSAVS (189 aa)) form the Glutamine amidotransferase type-1 domain. The Nucleophile role is filled by Cys248. 5 residues coordinate L-glutamine: Leu249, Gln252, Asn290, Gly292, and Tyr293. Active-site residues include His332 and Glu334.

It belongs to the CarA family. In terms of assembly, composed of two chains; the small (or glutamine) chain promotes the hydrolysis of glutamine to ammonia, which is used by the large (or ammonia) chain to synthesize carbamoyl phosphate. Tetramer of heterodimers (alpha,beta)4.

The enzyme catalyses hydrogencarbonate + L-glutamine + 2 ATP + H2O = carbamoyl phosphate + L-glutamate + 2 ADP + phosphate + 2 H(+). It catalyses the reaction L-glutamine + H2O = L-glutamate + NH4(+). It functions in the pathway amino-acid biosynthesis; L-arginine biosynthesis; carbamoyl phosphate from bicarbonate: step 1/1. The protein operates within pyrimidine metabolism; UMP biosynthesis via de novo pathway; (S)-dihydroorotate from bicarbonate: step 1/3. In terms of biological role, small subunit of the glutamine-dependent carbamoyl phosphate synthetase (CPSase). CPSase catalyzes the formation of carbamoyl phosphate from the ammonia moiety of glutamine, carbonate, and phosphate donated by ATP, constituting the first step of 2 biosynthetic pathways, one leading to arginine and/or urea and the other to pyrimidine nucleotides. The small subunit (glutamine amidotransferase) binds and cleaves glutamine to supply the large subunit with the substrate ammonia. The sequence is that of Carbamoyl phosphate synthase small chain from Symbiobacterium thermophilum (strain DSM 24528 / JCM 14929 / IAM 14863 / T).